The following is a 1009-amino-acid chain: Protein translocase subunit SecA (1009 aa).

Residues Gln-86, 104-108, and Asp-497 contribute to the ATP site; that span reads GEGKT. Disordered regions lie at residues 869 to 894 and 949 to 1009; these read AVPQ…GQQP and ERRP…RNAG. 2 stretches are compositionally biased toward low complexity: residues 883 to 894 and 953 to 973; these read PVPAATAPGQQP and SGAA…AGAG. Zn(2+)-binding residues include Cys-990, Cys-992, Cys-1001, and His-1002.

The protein belongs to the SecA family. Monomer and homodimer. Part of the essential Sec protein translocation apparatus which comprises SecA, SecYEG and auxiliary proteins SecDF. Other proteins may also be involved. The cofactor is Zn(2+).

The protein localises to the cell membrane. Its subcellular location is the cytoplasm. The catalysed reaction is ATP + H2O + cellular proteinSide 1 = ADP + phosphate + cellular proteinSide 2.. Its function is as follows. Part of the Sec protein translocase complex. Interacts with the SecYEG preprotein conducting channel. Has a central role in coupling the hydrolysis of ATP to the transfer of proteins into and across the cell membrane, serving as an ATP-driven molecular motor driving the stepwise translocation of polypeptide chains across the membrane. This chain is Protein translocase subunit SecA, found in Acidothermus cellulolyticus (strain ATCC 43068 / DSM 8971 / 11B).